The chain runs to 319 residues: uncharacterized protein (319 aa).

One can recognise an SIS domain in the interval 36 to 178 (IIEFLLSFKG…MTVIHEERGF (143 aa)). 51–56 (GIGKSG) contacts ATP. 2 consecutive CBS domains span residues 203-263 (MRSG…HLKT) and 268-319 (MTKN…MGVS).

Belongs to the SIS family. GutQ/KpsF subfamily.

This is an uncharacterized protein from Rickettsia prowazekii (strain Madrid E).